A 297-amino-acid chain; its full sequence is ATP synthase subunit gamma, mitochondrial (297 aa).

It belongs to the ATPase gamma chain family. In terms of assembly, F-type ATPases have 2 components, CF(1) - the catalytic core - and CF(0) - the membrane proton channel. CF(1) has five subunits: alpha(3), beta(3), gamma(1), delta(1), epsilon(1). CF(0) has three main subunits: a, b and c.

It is found in the mitochondrion. The protein localises to the mitochondrion inner membrane. Its function is as follows. Mitochondrial membrane ATP synthase (F(1)F(0) ATP synthase or Complex V) produces ATP from ADP in the presence of a proton gradient across the membrane which is generated by electron transport complexes of the respiratory chain. F-type ATPases consist of two structural domains, F(1) - containing the extramembraneous catalytic core, and F(0) - containing the membrane proton channel, linked together by a central stalk and a peripheral stalk. During catalysis, ATP synthesis in the catalytic domain of F(1) is coupled via a rotary mechanism of the central stalk subunits to proton translocation. Part of the complex F(1) domain and the central stalk which is part of the complex rotary element. The gamma subunit protrudes into the catalytic domain formed of alpha(3)beta(3). Rotation of the central stalk against the surrounding alpha(3)beta(3) subunits leads to hydrolysis of ATP in three separate catalytic sites on the beta subunits. The protein is ATP synthase subunit gamma, mitochondrial of Drosophila melanogaster (Fruit fly).